A 137-amino-acid chain; its full sequence is Small ribosomal subunit protein uS12 (137 aa).

Aspartate 89 carries the post-translational modification 3-methylthioaspartic acid. Residues 101-137 (SLDTSGVADRKQSRSKYGAKQPKAGAPAAPVKGKGKK) are disordered. Low complexity predominate over residues 116–137 (KYGAKQPKAGAPAAPVKGKGKK).

The protein belongs to the universal ribosomal protein uS12 family. Part of the 30S ribosomal subunit. Contacts proteins S8 and S17. May interact with IF1 in the 30S initiation complex.

Functionally, with S4 and S5 plays an important role in translational accuracy. In terms of biological role, interacts with and stabilizes bases of the 16S rRNA that are involved in tRNA selection in the A site and with the mRNA backbone. Located at the interface of the 30S and 50S subunits, it traverses the body of the 30S subunit contacting proteins on the other side and probably holding the rRNA structure together. The combined cluster of proteins S8, S12 and S17 appears to hold together the shoulder and platform of the 30S subunit. This is Small ribosomal subunit protein uS12 from Chlorobium chlorochromatii (strain CaD3).